We begin with the raw amino-acid sequence, 339 residues long: Biotin synthase (339 aa).

Residues 51-278 (TEVELATLLS…KARVRLSAGR (228 aa)) enclose the Radical SAM core domain. Cysteine 66, cysteine 70, and cysteine 73 together coordinate [4Fe-4S] cluster. The [2Fe-2S] cluster site is built by cysteine 110, cysteine 141, cysteine 201, and arginine 273.

This sequence belongs to the radical SAM superfamily. Biotin synthase family. In terms of assembly, homodimer. The cofactor is [4Fe-4S] cluster. [2Fe-2S] cluster serves as cofactor.

The catalysed reaction is (4R,5S)-dethiobiotin + (sulfur carrier)-SH + 2 reduced [2Fe-2S]-[ferredoxin] + 2 S-adenosyl-L-methionine = (sulfur carrier)-H + biotin + 2 5'-deoxyadenosine + 2 L-methionine + 2 oxidized [2Fe-2S]-[ferredoxin]. The protein operates within cofactor biosynthesis; biotin biosynthesis; biotin from 7,8-diaminononanoate: step 2/2. Its function is as follows. Catalyzes the conversion of dethiobiotin (DTB) to biotin by the insertion of a sulfur atom into dethiobiotin via a radical-based mechanism. The protein is Biotin synthase of Janthinobacterium sp. (strain Marseille) (Minibacterium massiliensis).